The primary structure comprises 511 residues: Inner membrane ABC transporter permease protein YnjC (511 aa).

The Cytoplasmic segment spans residues 1–8 (MATPLRYA). A helical transmembrane segment spans residues 9–29 (LIFLLWAMVAVIYAPLIPAAL). The Periplasmic portion of the chain corresponds to 30 to 62 (TLISPALSLTHWQALFADPQLPQALLATLVSTT). Residues 54–255 (LLATLVSTTI…MLLLAAYVLL (202 aa)) enclose the ABC transmembrane type-1 1 domain. A helical transmembrane segment spans residues 63 to 83 (IAAVGALLIALLVIVALWPGP). Topologically, residues 84 to 91 (KWQRMCAR) are cytoplasmic. Residues 92–112 (LPWLLAIPHVAFATSALLLFA) traverse the membrane as a helical segment. The Periplasmic segment spans residues 113–130 (DGGLLYDYFPYFTPPMDR). The helical transmembrane segment at 131–151 (FGIGLGLTLAVKESAFLLWIL) threads the bilayer. The Cytoplasmic segment spans residues 152–189 (AAVLSEKWLLQQVIVLDSLGYSRWQCLNWLLLPSVAPA). The helical transmembrane segment at 190-210 (LAMAMLAIVAWSLSVVDVAII) threads the bilayer. The Periplasmic segment spans residues 211-239 (LGPGNPPTLAVISWQWLTQGDIDQQTKGA). A helical transmembrane segment spans residues 240–260 (LASLLLMLLLAAYVLLSYLLW). The Cytoplasmic portion of the chain corresponds to 261 to 284 (RSWRRTIPRVDGVRKPATPLLPGN). Residues 285–305 (TLAIFLPLTGVLCVVLLAILA) traverse the membrane as a helical segment. At 306-318 (DQSTINSEALINS) the chain is on the periplasmic side. The region spanning 315–496 (LINSLTMGLV…LLPLIIFALT (182 aa)) is the ABC transmembrane type-1 2 domain. Residues 319–339 (LTMGLVATFIALLLLLLWLEW) traverse the membrane as a helical segment. Over 340–345 (GPQRRQ) the chain is Cytoplasmic. Residues 346 to 366 (LWLWLPILLPALPLVAGQYTL) form a helical membrane-spanning segment. Topologically, residues 367-374 (ALWLKLDG) are periplasmic. A helical membrane pass occupies residues 375-395 (SWTAVVWGHLLWVMPWMLFIL). Topologically, residues 396 to 432 (QPAWQRIDSRLILIAQTLGWSRAKIFFYVKCPLMLRP) are cytoplasmic. Residues 433–453 (VLIAFAVGFAVGIAQYMPTLW) form a helical membrane-spanning segment. The Periplasmic segment spans residues 454–485 (LGAGRFPTLTTEAVALSSGGSNGILAAQALWQ). A helical transmembrane segment spans residues 486–506 (LLLPLIIFALTALVAKWVGYV). The Cytoplasmic portion of the chain corresponds to 507–511 (RQGLR).

Belongs to the binding-protein-dependent transport system permease family.

The protein resides in the cell inner membrane. Probably part of the binding-protein-dependent transport system YnjCD. Probably responsible for the translocation of the substrate across the membrane. This chain is Inner membrane ABC transporter permease protein YnjC (ynjC), found in Escherichia coli (strain K12).